A 525-amino-acid chain; its full sequence is Arylsulfatase G (525 aa).

A signal peptide spans 1–16; the sequence is MGWLFLKVLLVGMAFS. Ca(2+)-binding residues include D44, D45, and C84. C84 (nucleophile) is an active-site residue. The residue at position 84 (C84) is a 3-oxoalanine (Cys). N117 carries N-linked (GlcNAc...) asparagine glycosylation. K137 contacts substrate. The active site involves H139. A substrate-binding site is contributed by S162. The N-linked (GlcNAc...) asparagine glycan is linked to N215. H251 lines the substrate pocket. Ca(2+) is bound by residues D302 and N303. 2 N-linked (GlcNAc...) asparagine glycosylation sites follow: N356 and N497.

Belongs to the sulfatase family. Ca(2+) serves as cofactor. In terms of processing, N-glycosylated with both high mannose and complex type sugars. The conversion to 3-oxoalanine (also known as C-formylglycine, FGly), of a serine or cysteine residue in prokaryotes and of a cysteine residue in eukaryotes, is critical for catalytic activity. Post-translationally, the 63-kDa precursor undergoes proteolytic processing in two steps, yielding two fragments in the first step (apparent molecular masses of 44 and 18 kDa). In the second step, the 44-kDa fragment is processed further to the 34- and 10-kDa chains. The 10-kDa chain is a cleavage product of the 44-kDa fragment but linked to the 18-kDa chain through a disulfide bridge. As to expression, highly expressed in the spleen, kidney, liver, brain, and testis (at protein level).

Its subcellular location is the lysosome. The enzyme catalyses an aryl sulfate + H2O = a phenol + sulfate + H(+). It catalyses the reaction Hydrolysis of the 3-sulfate groups of the N-sulfo-D-glucosamine 3-O-sulfate units of heparin.. Functionally, displays arylsulfatase activity at acidic pH towards the artificial substrate p-nitrocatechol sulfate. Catalyzes the hydrolysis of the 3-sulfate groups of the N-sulfo-D-glucosamine 3-O-sulfate units of heparin. This chain is Arylsulfatase G (Arsg), found in Mus musculus (Mouse).